A 338-amino-acid chain; its full sequence is Peptidyl-prolyl cis-trans isomerase cyp11 (338 aa).

Residues 7–172 (FFDIDVDGNR…HNVMIANCGE (166 aa)) form the PPIase cyclophilin-type domain. The tract at residues 186-338 (ASAVSDESED…RGRFKYRPTY (153 aa)) is disordered. A compositionally biased stretch (acidic residues) spans 208–218 (DDSSSDEDSEE). The span at 223–242 (RTKKKRSRKHSKKDKKKKKR) shows a compositional bias: basic residues. Positions 243–309 (ESSNRKRSPE…PEKRSSERRV (67 aa)) are enriched in basic and acidic residues. Over residues 329-338 (RGRFKYRPTY) the composition is skewed to basic residues.

This sequence belongs to the cyclophilin-type PPIase family.

It carries out the reaction [protein]-peptidylproline (omega=180) = [protein]-peptidylproline (omega=0). In terms of biological role, PPIases accelerate the folding of proteins. It catalyzes the cis-trans isomerization of proline imidic peptide bonds in oligopeptides. This is Peptidyl-prolyl cis-trans isomerase cyp11 (cyp11) from Rhizopus delemar (strain RA 99-880 / ATCC MYA-4621 / FGSC 9543 / NRRL 43880) (Mucormycosis agent).